The sequence spans 748 residues: Transducin-like enhancer protein 4 (748 aa).

2 disordered regions span residues 1–20 and 157–332; these read MIRD…PHQP and LPIK…DPLA. The segment at 1–112 is q domain; it reads MIRDLSKMYR…SQEQQQLQAQ (112 aa). The GP domain stretch occupies residues 113-179; that stretch reads HLLTWTWSAC…HQRDRDSIKS (67 aa). A compositionally biased stretch (basic and acidic residues) spans 158-177; it reads PIKDEKKHHDNDHQRDRDSI. The span at 178-189 shows a compositional bias: low complexity; sequence KSSSVSPSASFR. The segment at 180–249 is ccN domain; sequence SSVSPSASFR…SPRGSPAHSP (70 aa). Phosphoserine is present on residues serine 183, serine 187, serine 191, and serine 197. The span at 190 to 227 shows a compositional bias: basic and acidic residues; it reads GSEKHRNSTDYSSESKKQKTEEKEIAARYDSDGEKSDD. The residue at position 212 (lysine 212) is an N6-acetyllysine. Position 220 is a phosphoserine (serine 220). Phosphoserine; by CK2 is present on serine 225. Serine 240 is subject to Phosphoserine; by CDK1. Residues serine 244 and serine 248 each carry the phosphoserine modification. Residues 248–264 show a composition bias toward basic and acidic residues; that stretch reads SPRENGLDKTRLLKKDA. Residues 250–427 form an SP domain region; that stretch reads RENGLDKTRL…PGGKPAYSFH (178 aa). Lysine 256 is subject to N6-acetyllysine. Low complexity predominate over residues 265–280; the sequence is PISPASVASSSSTPSS. Serine 267 bears the Phosphoserine mark. The span at 292–303 shows a compositional bias: polar residues; it reads TTPVSKSNTPTP. A Phosphothreonine modification is found at threonine 293. 2 positions are modified to phosphoserine: serine 296 and serine 298. 4 positions are modified to phosphothreonine: threonine 300, threonine 302, threonine 309, and threonine 315. The residue at position 394 (serine 394) is a Phosphoserine. WD repeat units lie at residues 460–498, 506–545, 550–589, 592–631, 633–672, 674–713, and 715–748; these read NHGE…NKSP, NRDN…PRIK, SSAP…LVRQ, GHTD…QLQQ, DFTS…KYQL, LHES…SIFQ, and KESS…EVIY.

Belongs to the WD repeat Groucho/TLE family. As to quaternary structure, homooligomer and heterooligomer with other family members. Binds PAX5, LEF1, TCF7, TCF7L1 and TCF7L2. Interacts with ZNF703; TLE4 may mediate ZNF703 transcriptional repression. Interacts with SIX3 and SIX6. Interacts with PAX2. In terms of processing, phosphorylated. PAX5 binding increases phosphorylation. Post-translationally, ubiquitinated by XIAP/BIRC4.

It localises to the nucleus. Functionally, transcriptional corepressor that binds to a number of transcription factors. Inhibits the transcriptional activation mediated by PAX5, and by CTNNB1 and TCF family members in Wnt signaling. The effects of full-length TLE family members may be modulated by association with dominant-negative AES. Essential for the transcriptional repressor activity of SIX3 during retina and lens development and for SIX3 transcriptional auto-repression. Involved in transcriptional repression of GNRHR and enhances MSX1-mediated transcriptional repression of CGA/alpha-GSU. The chain is Transducin-like enhancer protein 4 (Tle4) from Rattus norvegicus (Rat).